A 395-amino-acid polypeptide reads, in one-letter code: Imidazolonepropionase (395 aa).

His63 and His65 together coordinate Fe(3+). The Zn(2+) site is built by His63 and His65. 3 residues coordinate 4-imidazolone-5-propanoate: Arg72, Tyr135, and His168. N-formimidoyl-L-glutamate is bound at residue Tyr135. Residue His233 participates in Fe(3+) binding. His233 provides a ligand contact to Zn(2+). A 4-imidazolone-5-propanoate-binding site is contributed by Gln236. Asp308 serves as a coordination point for Fe(3+). Asp308 lines the Zn(2+) pocket. 2 residues coordinate N-formimidoyl-L-glutamate: Asn310 and Gly312. Residue Thr313 coordinates 4-imidazolone-5-propanoate.

Belongs to the metallo-dependent hydrolases superfamily. HutI family. Zn(2+) serves as cofactor. It depends on Fe(3+) as a cofactor.

Its subcellular location is the cytoplasm. It catalyses the reaction 4-imidazolone-5-propanoate + H2O = N-formimidoyl-L-glutamate. The protein operates within amino-acid degradation; L-histidine degradation into L-glutamate; N-formimidoyl-L-glutamate from L-histidine: step 3/3. Catalyzes the hydrolytic cleavage of the carbon-nitrogen bond in imidazolone-5-propanoate to yield N-formimidoyl-L-glutamate. It is the third step in the universal histidine degradation pathway. The chain is Imidazolonepropionase from Cereibacter sphaeroides (strain KD131 / KCTC 12085) (Rhodobacter sphaeroides).